A 214-amino-acid polypeptide reads, in one-letter code: 14-3-3 protein homolog 2 (214 aa).

The protein belongs to the 14-3-3 family.

This is 14-3-3 protein homolog 2 from Schistosoma mansoni (Blood fluke).